A 1099-amino-acid chain; its full sequence is Inverted formin-2 (1099 aa).

Residues 1–330 (MSLTEGAHTK…RAVLLADDCQ (330 aa)) enclose the GBD/FH3 domain. Basic and acidic residues-rich tracts occupy residues 348-359 (SSKEKRKTDKCT) and 367-385 (QTDK…KKDP). Disordered regions lie at residues 348-391 (SSKE…SGIP), 432-509 (PSPP…PTPP), and 1000-1019 (AEKR…KGEN). In terms of domain architecture, FH1 spans 426 to 569 (TCSSVLPSPP…GMLPPPPPLP (144 aa)). Residues 452 to 499 (PLPPPPPPLPGTELSPPPPGMVALSLPPPPPPLPGMGGMLPPPPPPLP) are compositionally biased toward pro residues. Residues 621 to 1009 (FLKVNKPTLK…AEKRKQQIAD (389 aa)) enclose the FH2 domain. Residues 907–1019 (LKKLRDLQNK…EETKRQKGEN (113 aa)) are a coiled coil. A WH2 domain is found at 1037–1052 (DDLLADIKKGFQLRKT). The disordered stretch occupies residues 1064-1085 (KTLSSETNRTDIQHVGKRPEVP). Basic and acidic residues predominate over residues 1071-1083 (NRTDIQHVGKRPE).

Belongs to the formin homology family.

The protein is Inverted formin-2 (inf2) of Xenopus laevis (African clawed frog).